Here is a 588-residue protein sequence, read N- to C-terminus: Adenine deaminase (588 aa).

Belongs to the metallo-dependent hydrolases superfamily. Adenine deaminase family. In terms of assembly, homodimer. Mn(2+) serves as cofactor.

The enzyme catalyses adenine + H2O + H(+) = hypoxanthine + NH4(+). The polypeptide is Adenine deaminase (Escherichia coli (strain SMS-3-5 / SECEC)).